A 504-amino-acid polypeptide reads, in one-letter code: ATP synthase subunit alpha (504 aa).

169-176 (GDRQIGKT) is a binding site for ATP.

It belongs to the ATPase alpha/beta chains family. In terms of assembly, F-type ATPases have 2 components, CF(1) - the catalytic core - and CF(0) - the membrane proton channel. CF(1) has five subunits: alpha(3), beta(3), gamma(1), delta(1), epsilon(1). CF(0) has three main subunits: a(1), b(2) and c(9-12). The alpha and beta chains form an alternating ring which encloses part of the gamma chain. CF(1) is attached to CF(0) by a central stalk formed by the gamma and epsilon chains, while a peripheral stalk is formed by the delta and b chains.

The protein localises to the cell membrane. The catalysed reaction is ATP + H2O + 4 H(+)(in) = ADP + phosphate + 5 H(+)(out). In terms of biological role, produces ATP from ADP in the presence of a proton gradient across the membrane. The alpha chain is a regulatory subunit. The chain is ATP synthase subunit alpha from Syntrophomonas wolfei subsp. wolfei (strain DSM 2245B / Goettingen).